The primary structure comprises 913 residues: DNA mismatch repair protein MutS (913 aa).

The interval 18 to 50 (NNKQKEKTKIPEDLSLEDLKKESQKRPRQRKNS) is disordered. A compositionally biased stretch (basic and acidic residues) spans 19 to 42 (NKQKEKTKIPEDLSLEDLKKESQK). 720–727 (GPNASGKS) is a binding site for ATP.

It belongs to the DNA mismatch repair MutS family.

Its function is as follows. This protein is involved in the repair of mismatches in DNA. It is possible that it carries out the mismatch recognition step. This protein has a weak ATPase activity. The polypeptide is DNA mismatch repair protein MutS (Prochlorococcus marinus (strain MIT 9301)).